We begin with the raw amino-acid sequence, 92 residues long: Muconolactone Delta-isomerase (92 aa).

This sequence belongs to the muconolactone Delta-isomerase family. In terms of assembly, homodecamer.

It catalyses the reaction (S)-muconolactone = (4,5-dihydro-5-oxofuran-2-yl)-acetate. It participates in aromatic compound metabolism; beta-ketoadipate pathway; 5-oxo-4,5-dihydro-2-furylacetate from catechol: step 3/3. In Cupriavidus pinatubonensis (strain JMP 134 / LMG 1197) (Cupriavidus necator (strain JMP 134)), this protein is Muconolactone Delta-isomerase (catC).